The sequence spans 336 residues: Protein SGT1 homolog (336 aa).

Ala-2 carries the N-acetylalanine modification. 3 TPR repeats span residues 11 to 44 (SQRLFQSFSDALIDGDPQAALEELTKALEQNPDD), 45 to 78 (AQYYCQRAYCHILLGKYRDGIADVKKSLELNPNN), and 79 to 112 (CTALLRKGICEYHEKDYASALETFAEGQKLDSTD). The 90-residue stretch at 140–229 (QSKIKYDWYQ…PEAVRWEKLE (90 aa)) folds into the CS domain. Phosphothreonine is present on Thr-236. Residues 247 to 336 (MYPSSSHYTR…PPDDMEWKQY (90 aa)) form the SGS domain. Phosphoserine is present on Ser-252. The residue at position 255 (Thr-255) is a Phosphothreonine. A Glycyl lysine isopeptide (Lys-Gly) (interchain with G-Cter in SUMO1); alternate cross-link involves residue Lys-266. Residue Lys-266 forms a Glycyl lysine isopeptide (Lys-Gly) (interchain with G-Cter in SUMO2); alternate linkage. At Ser-302 the chain carries Phosphoserine.

It belongs to the SGT1 family. Probably associates with SCF (SKP1-CUL1-F-box protein) complex through interaction with SKP1. Interacts with S100A6. Interacts with HSP90. Phosphorylated at Ser-252 and Ser-302, dephosphorylation promotes nuclear translocation, most likely due to disruption of the SUGT1-HSP90 complex.

The protein localises to the cytoplasm. It localises to the nucleus. In terms of biological role, may play a role in ubiquitination and subsequent proteasomal degradation of target proteins. This Mus musculus (Mouse) protein is Protein SGT1 homolog.